A 222-amino-acid polypeptide reads, in one-letter code: MLRLVQSNTGFRSLSCRLLSSTKLVTPRFWYSQDNSKAEEIFKRKLIAREKEFRSRLPQWEKRDISLKKRYGVWNPTKKVSRVQMQDIRSLKLQMPNLKTVDMANMFGVSPESIRRILNSKWQPSENDMKKLEKRAERRKAESRERKEQSEQDLKDGVRRIHRAKTIKLQNVRYKETDAINEKDTSKKTASKRQSHAVTGKQGKMKTTIDKPFVPSVADLIK.

Residues 1-26 (MLRLVQSNTGFRSLSCRLLSSTKLVT) constitute a mitochondrion transit peptide. Disordered stretches follow at residues 120–158 (SKWQ…KDGV) and 177–207 (TDAI…KMKT). Basic and acidic residues-rich tracts occupy residues 127-158 (NDMK…KDGV) and 177-187 (TDAINEKDTSK).

Belongs to the RRG9 family.

It is found in the mitochondrion. In terms of biological role, required for respiratory activity and maintenance and expression of the mitochondrial genome. This is Required for respiratory growth protein 9, mitochondrial (RRG9) from Scheffersomyces stipitis (strain ATCC 58785 / CBS 6054 / NBRC 10063 / NRRL Y-11545) (Yeast).